Reading from the N-terminus, the 282-residue chain is Nucleotide-binding protein XCC2806 (282 aa).

5-12 (GLSGSGKS) is an ATP binding site. Residue 57 to 60 (DVRS) participates in GTP binding.

This sequence belongs to the RapZ-like family.

Displays ATPase and GTPase activities. In Xanthomonas campestris pv. campestris (strain ATCC 33913 / DSM 3586 / NCPPB 528 / LMG 568 / P 25), this protein is Nucleotide-binding protein XCC2806.